The sequence spans 232 residues: Large ribosomal subunit protein uL1 (232 aa).

Belongs to the universal ribosomal protein uL1 family. As to quaternary structure, part of the 50S ribosomal subunit.

In terms of biological role, binds directly to 23S rRNA. The L1 stalk is quite mobile in the ribosome, and is involved in E site tRNA release. Functionally, protein L1 is also a translational repressor protein, it controls the translation of the L11 operon by binding to its mRNA. The chain is Large ribosomal subunit protein uL1 from Cereibacter sphaeroides (strain ATCC 17029 / ATH 2.4.9) (Rhodobacter sphaeroides).